Here is a 506-residue protein sequence, read N- to C-terminus: Glutamate--tRNA ligase (506 aa).

A 'HIGH' region motif is present at residues 12–22; the sequence is PSPTGDPHVGT. Residues 253 to 257 carry the 'KMSKS' region motif; the sequence is KLSKR. An ATP-binding site is contributed by K256.

It belongs to the class-I aminoacyl-tRNA synthetase family. Glutamate--tRNA ligase type 1 subfamily. As to quaternary structure, monomer.

Its subcellular location is the cytoplasm. It carries out the reaction tRNA(Glu) + L-glutamate + ATP = L-glutamyl-tRNA(Glu) + AMP + diphosphate. Functionally, catalyzes the attachment of glutamate to tRNA(Glu) in a two-step reaction: glutamate is first activated by ATP to form Glu-AMP and then transferred to the acceptor end of tRNA(Glu). This chain is Glutamate--tRNA ligase, found in Chlamydia muridarum (strain MoPn / Nigg).